The primary structure comprises 85 residues: LYR motif-containing protein 5A (85 aa).

It belongs to the complex I LYR family.

This chain is LYR motif-containing protein 5A (lyrm5a), found in Danio rerio (Zebrafish).